Consider the following 279-residue polypeptide: Polyamine aminopropyltransferase (279 aa).

In terms of domain architecture, PABS spans 4–237; that stretch reads IEWYPRGYGV…SPWAFLVGIK (234 aa). Gln29 is a binding site for S-methyl-5'-thioadenosine. Residues His60 and Asp84 each contribute to the spermidine site. S-methyl-5'-thioadenosine is bound by residues Glu104 and 141-142; that span reads DG. Asp158 (proton acceptor) is an active-site residue. Residue 158 to 161 coordinates spermidine; the sequence is DSTD. S-methyl-5'-thioadenosine is bound at residue Pro165.

This sequence belongs to the spermidine/spermine synthase family. As to quaternary structure, homodimer or homotetramer.

The protein localises to the cytoplasm. It catalyses the reaction S-adenosyl 3-(methylsulfanyl)propylamine + putrescine = S-methyl-5'-thioadenosine + spermidine + H(+). Its pathway is amine and polyamine biosynthesis; spermidine biosynthesis; spermidine from putrescine: step 1/1. Its function is as follows. Catalyzes the irreversible transfer of a propylamine group from the amino donor S-adenosylmethioninamine (decarboxy-AdoMet) to putrescine (1,4-diaminobutane) to yield spermidine. The sequence is that of Polyamine aminopropyltransferase from Pyrococcus abyssi (strain GE5 / Orsay).